Consider the following 256-residue polypeptide: Homeobox protein TGIF2LX (256 aa).

Residues 1–45 are disordered; it reads MEAAADSPAETRSRVEKDSRRVEKDSRRPKKDSPAKTQSPAQDTS. Basic and acidic residues predominate over residues 9 to 34; sequence AETRSRVEKDSRRVEKDSRRPKKDSP. Residues 35–45 show a composition bias toward polar residues; sequence AKTQSPAQDTS. Positions 62 to 125 form a DNA-binding region, homeobox; TALE-type; it reads EHKKKRKGYL…INARRRILPD (64 aa). The segment at 136–224 is disordered; it reads VGHKTGKDAN…SSSPEPVSTE (89 aa). Residues 166 to 179 show a composition bias toward polar residues; that stretch reads DNVQSLPLRSSPKG. Residues 209 to 224 are compositionally biased toward low complexity; it reads VSNITSSSSPEPVSTE.

The protein belongs to the TALE/TGIF homeobox family.

The protein localises to the nucleus. Its function is as follows. May have a transcription role in testis. In Papio hamadryas (Hamadryas baboon), this protein is Homeobox protein TGIF2LX (TGIF2LX).